Consider the following 305-residue polypeptide: MIKQRTLKRIVQATGVGLHTGKKVTLTLRPAPANTGVIYRRTDLNPPVDFPADAKSVRDTMLCTCLVNEHDVRISTVEHLNAALAGLGIDNIVIEVNAPEIPIMDGSAAPFVYLLLDAGIDELNCAKKFVRIKETVRVEDGDKWAEFKPYNGFSLDFTIDFNHPAIDSSNQRYAMNFSADAFMRQISRARTFGFMRDIEYLQSRGLCLGGSFDCAIVVDDYRVLNEDGLRFEDEFVRHKMLDAIGDLFMCGHNIIGAFIAYKSGHALNNKLLQAVLAKQEAWEYVTFQDDAELPLTFKAPSAVLA.

Zn(2+) contacts are provided by histidine 79, histidine 238, and aspartate 242. The Proton donor role is filled by histidine 265.

The protein belongs to the LpxC family. Zn(2+) serves as cofactor.

It catalyses the reaction a UDP-3-O-[(3R)-3-hydroxyacyl]-N-acetyl-alpha-D-glucosamine + H2O = a UDP-3-O-[(3R)-3-hydroxyacyl]-alpha-D-glucosamine + acetate. Its pathway is glycolipid biosynthesis; lipid IV(A) biosynthesis; lipid IV(A) from (3R)-3-hydroxytetradecanoyl-[acyl-carrier-protein] and UDP-N-acetyl-alpha-D-glucosamine: step 2/6. In terms of biological role, catalyzes the hydrolysis of UDP-3-O-myristoyl-N-acetylglucosamine to form UDP-3-O-myristoylglucosamine and acetate, the committed step in lipid A biosynthesis. In Shigella boydii serotype 4 (strain Sb227), this protein is UDP-3-O-acyl-N-acetylglucosamine deacetylase.